A 314-amino-acid polypeptide reads, in one-letter code: Acetaldehyde dehydrogenase 1 (314 aa).

NAD(+) is bound at residue 16 to 19 (SGNI). Cys-134 functions as the Acyl-thioester intermediate in the catalytic mechanism. NAD(+) is bound by residues 165–173 (SAGPGTRAN) and Asn-292.

It belongs to the acetaldehyde dehydrogenase family.

It catalyses the reaction acetaldehyde + NAD(+) + CoA = acetyl-CoA + NADH + H(+). This is Acetaldehyde dehydrogenase 1 (mhpF) from Cupriavidus necator (strain ATCC 17699 / DSM 428 / KCTC 22496 / NCIMB 10442 / H16 / Stanier 337) (Ralstonia eutropha).